Here is a 197-residue protein sequence, read N- to C-terminus: Large ribosomal subunit protein bL25 (197 aa).

The protein belongs to the bacterial ribosomal protein bL25 family. CTC subfamily. As to quaternary structure, part of the 50S ribosomal subunit; part of the 5S rRNA/L5/L18/L25 subcomplex. Contacts the 5S rRNA. Binds to the 5S rRNA independently of L5 and L18.

This is one of the proteins that binds to the 5S RNA in the ribosome where it forms part of the central protuberance. This is Large ribosomal subunit protein bL25 from Caulobacter vibrioides (strain ATCC 19089 / CIP 103742 / CB 15) (Caulobacter crescentus).